A 118-amino-acid polypeptide reads, in one-letter code: DNA-binding protein MmarC5_1518 (118 aa).

The span at 1–12 (MNPEEIRQRRLQ) shows a compositional bias: basic and acidic residues. A disordered region spans residues 1 to 35 (MNPEEIRQRRLQEMQAKAQEQGAEDPEAQRQAQEQ).

It belongs to the PDCD5 family.

The chain is DNA-binding protein MmarC5_1518 from Methanococcus maripaludis (strain C5 / ATCC BAA-1333).